Reading from the N-terminus, the 253-residue chain is 5'/3'-nucleotidase SurE (253 aa).

Asp-8, Asp-9, Ser-39, and Asn-92 together coordinate a divalent metal cation.

The protein belongs to the SurE nucleotidase family. A divalent metal cation serves as cofactor.

Its subcellular location is the cytoplasm. The enzyme catalyses a ribonucleoside 5'-phosphate + H2O = a ribonucleoside + phosphate. It carries out the reaction a ribonucleoside 3'-phosphate + H2O = a ribonucleoside + phosphate. It catalyses the reaction [phosphate](n) + H2O = [phosphate](n-1) + phosphate + H(+). Its function is as follows. Nucleotidase with a broad substrate specificity as it can dephosphorylate various ribo- and deoxyribonucleoside 5'-monophosphates and ribonucleoside 3'-monophosphates with highest affinity to 3'-AMP. Also hydrolyzes polyphosphate (exopolyphosphatase activity) with the preference for short-chain-length substrates (P20-25). Might be involved in the regulation of dNTP and NTP pools, and in the turnover of 3'-mononucleotides produced by numerous intracellular RNases (T1, T2, and F) during the degradation of various RNAs. This is 5'/3'-nucleotidase SurE from Cronobacter sakazakii (strain ATCC BAA-894) (Enterobacter sakazakii).